A 343-amino-acid polypeptide reads, in one-letter code: Putative KilA-N domain-containing protein R904 (343 aa).

The KilA-N domain maps to 51–157; it reads EFSWGNYLNL…IKASVIINDY (107 aa). Residues 159-279 are a coiled coil; that stretch reads AKQMFKEHEK…NAVKEYKELY (121 aa).

This chain is Putative KilA-N domain-containing protein R904, found in Acanthamoeba polyphaga mimivirus (APMV).